Here is a 406-residue protein sequence, read N- to C-terminus: Cysteine desulfurase IscS (406 aa).

Residues 75 to 76 (AT), asparagine 155, glutamine 183, and 203 to 205 (SSH) each bind pyridoxal 5'-phosphate. Residue lysine 206 is modified to N6-(pyridoxal phosphate)lysine. Threonine 243 contacts pyridoxal 5'-phosphate. Cysteine 330 (cysteine persulfide intermediate) is an active-site residue. Position 330 (cysteine 330) interacts with [2Fe-2S] cluster.

This sequence belongs to the class-V pyridoxal-phosphate-dependent aminotransferase family. NifS/IscS subfamily. Homodimer. Forms a heterotetramer with IscU, interacts with other sulfur acceptors. It depends on pyridoxal 5'-phosphate as a cofactor.

The protein resides in the cytoplasm. The catalysed reaction is (sulfur carrier)-H + L-cysteine = (sulfur carrier)-SH + L-alanine. The protein operates within cofactor biosynthesis; iron-sulfur cluster biosynthesis. Its function is as follows. Master enzyme that delivers sulfur to a number of partners involved in Fe-S cluster assembly, tRNA modification or cofactor biosynthesis. Catalyzes the removal of elemental sulfur atoms from cysteine to produce alanine. Functions as a sulfur delivery protein for Fe-S cluster synthesis onto IscU, an Fe-S scaffold assembly protein, as well as other S acceptor proteins. The polypeptide is Cysteine desulfurase IscS (Glaesserella parasuis serovar 5 (strain SH0165) (Haemophilus parasuis)).